A 335-amino-acid polypeptide reads, in one-letter code: Glycerol-3-phosphate dehydrogenase [NAD(P)+] (335 aa).

NADPH is bound by residues Ser-15, Tyr-16, His-36, and Lys-110. 3 residues coordinate sn-glycerol 3-phosphate: Lys-110, Gly-139, and Thr-141. Ala-143 lines the NADPH pocket. Sn-glycerol 3-phosphate is bound by residues Lys-195, Asp-248, Ser-258, Arg-259, and Asn-260. Catalysis depends on Lys-195, which acts as the Proton acceptor. Arg-259 is an NADPH binding site. Positions 283 and 285 each coordinate NADPH.

Belongs to the NAD-dependent glycerol-3-phosphate dehydrogenase family.

Its subcellular location is the cytoplasm. The catalysed reaction is sn-glycerol 3-phosphate + NAD(+) = dihydroxyacetone phosphate + NADH + H(+). It carries out the reaction sn-glycerol 3-phosphate + NADP(+) = dihydroxyacetone phosphate + NADPH + H(+). It functions in the pathway membrane lipid metabolism; glycerophospholipid metabolism. In terms of biological role, catalyzes the reduction of the glycolytic intermediate dihydroxyacetone phosphate (DHAP) to sn-glycerol 3-phosphate (G3P), the key precursor for phospholipid synthesis. In Haemophilus influenzae (strain 86-028NP), this protein is Glycerol-3-phosphate dehydrogenase [NAD(P)+].